The primary structure comprises 831 residues: Intraflagellar transport protein 88 (831 aa).

TPR repeat units lie at residues 68–101 (IFKL…EQKV), 120–153 (TCIW…AEGA), 156–189 (AQIR…ASPS), 248–281 (FDPL…SILI), 492–525 (RGVH…DPYD), 526–559 (SFAH…NMES), 560–593 (VQAT…LPSY), 595–627 (DAIY…FSAV), 632–665 (PSIY…VPFS), 666–699 (LAVI…DTTT), and 700–733 (PKWS…FPTN). Residues 785–816 (RRNSVAAVGPGSRAGQDRFEASNNRVSSNTGD) are disordered. Residues 805–815 (ASNNRVSSNTG) show a composition bias toward polar residues.

The protein resides in the cell projection. It is found in the cilium. Its subcellular location is the flagellum. It localises to the cytoplasm. The protein localises to the cytoskeleton. The protein resides in the flagellum axoneme. It is found in the flagellum basal body. Its function is as follows. Component of the intraflagellar transport complex B (IFT-B) involved in flagellar assembly. The sequence is that of Intraflagellar transport protein 88 from Giardia intestinalis (strain ATCC 50803 / WB clone C6) (Giardia lamblia).